Here is a 285-residue protein sequence, read N- to C-terminus: uncharacterized protein (285 aa).

The Mn(2+) site is built by H110, D131, H133, D135, D214, and D216.

The protein belongs to the arginase family. Mn(2+) is required as a cofactor.

This is an uncharacterized protein from Methanothermus fervidus.